The following is a 229-amino-acid chain: Large ribosomal subunit protein bL25 (229 aa).

2 disordered regions span residues 1-21 and 187-229; these read MSDA…GASR and PSAL…KGDD. Acidic residues predominate over residues 196 to 207; sequence SEEEEDGEEVDA.

Belongs to the bacterial ribosomal protein bL25 family. CTC subfamily. As to quaternary structure, part of the 50S ribosomal subunit; part of the 5S rRNA/L5/L18/L25 subcomplex. Contacts the 5S rRNA. Binds to the 5S rRNA independently of L5 and L18.

Functionally, this is one of the proteins that binds to the 5S RNA in the ribosome where it forms part of the central protuberance. This is Large ribosomal subunit protein bL25 from Erythrobacter litoralis (strain HTCC2594).